A 247-amino-acid polypeptide reads, in one-letter code: ATP synthase subunit a 1 (247 aa).

6 consecutive transmembrane segments (helical) span residues 32-52 (YMLLAVVLIAGMMLAAGRALV), 82-102 (FFPLVFSLFMFIFVSNIVGII), 112-132 (IIVTFSLALLVFLTVIIYGFY), 141-161 (LFVPSGIPAVILPLVVVIEII), 181-201 (GHVTLKVFASFVTMLGALGFV), and 206-226 (ALLPLGLTVALTGLELMVAFL).

The protein belongs to the ATPase A chain family. As to quaternary structure, F-type ATPases have 2 components, CF(1) - the catalytic core - and CF(0) - the membrane proton channel. CF(1) has five subunits: alpha(3), beta(3), gamma(1), delta(1), epsilon(1). CF(0) has four main subunits: a, b, b' and c.

Its subcellular location is the cell inner membrane. In terms of biological role, key component of the proton channel; it plays a direct role in the translocation of protons across the membrane. The chain is ATP synthase subunit a 1 from Bradyrhizobium sp. (strain BTAi1 / ATCC BAA-1182).